We begin with the raw amino-acid sequence, 157 residues long: MSKVSGGGPCSRRRDGVDPALRSRARRRALQAVYAWQISGGVAKQVIAHFAHEQAYEVADLVYFEDLVEGVLTHCAELDEKLTPYLDRTIEEVDAIERAVLRLGAYELLYRQDVPYRVVINEAIMTAKRFGSKYGHTYVNGVLDRAALALRKVEVLG.

The protein belongs to the NusB family.

In terms of biological role, involved in transcription antitermination. Required for transcription of ribosomal RNA (rRNA) genes. Binds specifically to the boxA antiterminator sequence of the ribosomal RNA (rrn) operons. This Xylella fastidiosa (strain Temecula1 / ATCC 700964) protein is Transcription antitermination protein NusB.